Reading from the N-terminus, the 696-residue chain is Glycosyltransferase GlyA (696 aa).

Residues 1 to 301 are GT2 domain; the sequence is MLVDDKITVI…NQLSRQEESE (301 aa). Positions 302–556 are GT8 domain; that stretch reads KKAIVLAANY…TELGQNHHLH (255 aa). Residues 308 to 313 and 399 to 400 each bind UDP; these read AANYGY and DC. 3 residues coordinate Mn(2+): Asp-399, Asp-401, and His-518. 518-524 is a binding site for UDP; the sequence is HYLSHRK.

The protein in the N-terminal section; belongs to the glycosyltransferase 2 family. It in the central section; belongs to the glycosyltransferase 8 family.

The protein operates within protein modification; protein glycosylation. Functionally, involved in the polymorphic O-glycosylation of the serine-rich repeat protein PsrP. Catalyzes the fourth step in glycosylation of PsrP in this bacteria. Can transfer the sugar from UDP-galactose to the terminal sugar moiety of PsrP-GlcNAc-Glc-Gal or of PsrP-GlcNAc-Glc-Glc (using truncated substrates with the PsrP SSR1 domain). Has hydrolytic activity against UDP-galactose and to a lesser extent against UDP-glucose. The protein is Glycosyltransferase GlyA of Streptococcus pneumoniae serotype 4 (strain ATCC BAA-334 / TIGR4).